Reading from the N-terminus, the 694-residue chain is LMBR1 domain-containing protein 2 homolog (694 aa).

Over 1–3 (MAY) the chain is Extracellular. The helical transmembrane segment at 4–26 (LLSFGIVAALFLASISLYRYGNI) threads the bilayer. At 27-30 (PRQH) the chain is on the cytoplasmic side. Residues 31 to 51 (ILVTLSVLTAWCFSFLIVFTI) traverse the membrane as a helical segment. Topologically, residues 52 to 106 (PLDVTSTLYRQCVEEHRPTPAPNVTNTSSATVGPPPQCQEPWGMVPASVFPNLWR) are extracellular. N-linked (GlcNAc...) asparagine glycosylation is found at N74 and N77. The helical transmembrane segment at 107 to 127 (IIYWSSQFLTWLIMPLMQSYL) threads the bilayer. The Cytoplasmic segment spans residues 128–144 (KAGDFTVKGKLKSALIE). A helical transmembrane segment spans residues 145-165 (NAIYYGSYLFICGVLLIYIAV). The Extracellular segment spans residues 166–181 (KGESLDWQKLKAIASS). The helical transmembrane segment at 182–202 (ASNTWGLFLLILLLGYALVEV) threads the bilayer. Residues 203–381 (PRSLWNNAKP…ECLLKAPFLK (179 aa)) are Cytoplasmic-facing. The stretch at 222 to 249 (KAAKLSTEKAEAEEHVDDILESLQGLSR) forms a coiled coil. The chain crosses the membrane as a helical span at residues 382–402 (TMCVLTATMSAMVVWSELTFF). Residues 403 to 426 (SRHPVLSIFANVIYVAKESYDFFT) are Extracellular-facing. A helical transmembrane segment spans residues 427-447 (IEVFSMVVLCYFFYCTYSTIL). The Cytoplasmic portion of the chain corresponds to 448-467 (RIRFLNLYYLAPHHQTNEHS). The helical transmembrane segment at 468 to 488 (LIFSGMLLCRLTPPMCLNFLG) threads the bilayer. The Extracellular portion of the chain corresponds to 489–514 (LIHMDTHIIPNRIMETVYTQIMGHMD). A helical membrane pass occupies residues 515-535 (VIGIISNGFNIYFPMCMLAFC). Residues 536 to 694 (LATWFSLGSR…PPPRGLFDDV (159 aa)) lie on the Cytoplasmic side of the membrane. Positions 564–592 (ELVQEGKDLIAREKRRRQRAEEAMARRRD) form a coiled coil. The segment at 673 to 694 (DYEAETDGRIVGPPPRGLFDDV) is disordered.

Belongs to the LIMR family.

It is found in the membrane. This is LMBR1 domain-containing protein 2 homolog from Drosophila melanogaster (Fruit fly).